Consider the following 140-residue polypeptide: ATP synthase epsilon chain (140 aa).

This sequence belongs to the ATPase epsilon chain family. F-type ATPases have 2 components, CF(1) - the catalytic core - and CF(0) - the membrane proton channel. CF(1) has five subunits: alpha(3), beta(3), gamma(1), delta(1), epsilon(1). CF(0) has three main subunits: a, b and c.

It localises to the cell inner membrane. Its function is as follows. Produces ATP from ADP in the presence of a proton gradient across the membrane. The protein is ATP synthase epsilon chain of Bordetella bronchiseptica (strain ATCC BAA-588 / NCTC 13252 / RB50) (Alcaligenes bronchisepticus).